Consider the following 398-residue polypeptide: 1-deoxy-D-xylulose 5-phosphate reductoisomerase (398 aa).

NADPH is bound by residues Thr11, Gly12, Ser13, Ile14, Arg38, Asn39, and Asn125. Lys126 is a 1-deoxy-D-xylulose 5-phosphate binding site. Glu127 contributes to the NADPH binding site. Residue Asp151 participates in Mn(2+) binding. Ser152, Glu153, Ser179, and His202 together coordinate 1-deoxy-D-xylulose 5-phosphate. Glu153 lines the Mn(2+) pocket. Residue Gly208 coordinates NADPH. Ser215, Asn220, Lys221, and Glu224 together coordinate 1-deoxy-D-xylulose 5-phosphate. Glu224 contributes to the Mn(2+) binding site.

This sequence belongs to the DXR family. Mg(2+) serves as cofactor. Requires Mn(2+) as cofactor.

It carries out the reaction 2-C-methyl-D-erythritol 4-phosphate + NADP(+) = 1-deoxy-D-xylulose 5-phosphate + NADPH + H(+). Its pathway is isoprenoid biosynthesis; isopentenyl diphosphate biosynthesis via DXP pathway; isopentenyl diphosphate from 1-deoxy-D-xylulose 5-phosphate: step 1/6. Its function is as follows. Catalyzes the NADPH-dependent rearrangement and reduction of 1-deoxy-D-xylulose-5-phosphate (DXP) to 2-C-methyl-D-erythritol 4-phosphate (MEP). This chain is 1-deoxy-D-xylulose 5-phosphate reductoisomerase, found in Burkholderia lata (strain ATCC 17760 / DSM 23089 / LMG 22485 / NCIMB 9086 / R18194 / 383).